Here is a 247-residue protein sequence, read N- to C-terminus: Probable transcriptional regulatory protein EUBELI_00902 (247 aa).

This sequence belongs to the TACO1 family.

The protein localises to the cytoplasm. This Lachnospira eligens (strain ATCC 27750 / DSM 3376 / VPI C15-48 / C15-B4) (Eubacterium eligens) protein is Probable transcriptional regulatory protein EUBELI_00902.